Reading from the N-terminus, the 473-residue chain is GTPase Der (473 aa).

EngA-type G domains lie at 3-167 (FTVA…GKDR) and 203-378 (LRVA…RVWN). GTP-binding positions include 9–16 (GRPNVGKS), 56–60 (DTAGL), 119–122 (NKSE), 209–216 (GRPNAGKS), 256–260 (DTAGM), and 321–324 (NKWD). A KH-like domain is found at 379–463 (KRISTARLNR…PIRIHFRSPD (85 aa)).

It belongs to the TRAFAC class TrmE-Era-EngA-EngB-Septin-like GTPase superfamily. EngA (Der) GTPase family. As to quaternary structure, associates with the 50S ribosomal subunit.

GTPase that plays an essential role in the late steps of ribosome biogenesis. The chain is GTPase Der from Rhizobium etli (strain ATCC 51251 / DSM 11541 / JCM 21823 / NBRC 15573 / CFN 42).